The primary structure comprises 362 residues: Carbamoyl phosphate synthase small chain (362 aa).

The CPSase stretch occupies residues 1-172; it reads MKAFLVLDNG…SKYIFGTHTG (172 aa). L-glutamine is bound by residues serine 45, glycine 224, and glycine 226. The Glutamine amidotransferase type-1 domain maps to 176–362; the sequence is KLAVYDYGVK…YDLVEKTKKG (187 aa). The active-site Nucleophile is cysteine 252. L-glutamine contacts are provided by leucine 253, glutamine 256, asparagine 294, glycine 296, and phenylalanine 297. Active-site residues include histidine 335 and glutamate 337.

The protein belongs to the CarA family. In terms of assembly, composed of two chains; the small (or glutamine) chain promotes the hydrolysis of glutamine to ammonia, which is used by the large (or ammonia) chain to synthesize carbamoyl phosphate. Tetramer of heterodimers (alpha,beta)4.

It carries out the reaction hydrogencarbonate + L-glutamine + 2 ATP + H2O = carbamoyl phosphate + L-glutamate + 2 ADP + phosphate + 2 H(+). The enzyme catalyses L-glutamine + H2O = L-glutamate + NH4(+). The protein operates within amino-acid biosynthesis; L-arginine biosynthesis; carbamoyl phosphate from bicarbonate: step 1/1. It functions in the pathway pyrimidine metabolism; UMP biosynthesis via de novo pathway; (S)-dihydroorotate from bicarbonate: step 1/3. Its function is as follows. Small subunit of the glutamine-dependent carbamoyl phosphate synthetase (CPSase). CPSase catalyzes the formation of carbamoyl phosphate from the ammonia moiety of glutamine, carbonate, and phosphate donated by ATP, constituting the first step of 2 biosynthetic pathways, one leading to arginine and/or urea and the other to pyrimidine nucleotides. The small subunit (glutamine amidotransferase) binds and cleaves glutamine to supply the large subunit with the substrate ammonia. The sequence is that of Carbamoyl phosphate synthase small chain from Leptospira interrogans serogroup Icterohaemorrhagiae serovar Lai (strain 56601).